Reading from the N-terminus, the 447-residue chain is Probable cytosol aminopeptidase (447 aa).

2 residues coordinate Mn(2+): Lys-218 and Asp-223. The active site involves Lys-230. Positions 241, 300, and 302 each coordinate Mn(2+). The active site involves Arg-304.

It belongs to the peptidase M17 family. Mn(2+) is required as a cofactor.

It localises to the cytoplasm. The enzyme catalyses Release of an N-terminal amino acid, Xaa-|-Yaa-, in which Xaa is preferably Leu, but may be other amino acids including Pro although not Arg or Lys, and Yaa may be Pro. Amino acid amides and methyl esters are also readily hydrolyzed, but rates on arylamides are exceedingly low.. It catalyses the reaction Release of an N-terminal amino acid, preferentially leucine, but not glutamic or aspartic acids.. Functionally, presumably involved in the processing and regular turnover of intracellular proteins. Catalyzes the removal of unsubstituted N-terminal amino acids from various peptides. This is Probable cytosol aminopeptidase (pepA) from Mycoplasma genitalium (strain ATCC 33530 / DSM 19775 / NCTC 10195 / G37) (Mycoplasmoides genitalium).